Here is a 511-residue protein sequence, read N- to C-terminus: MRLPVSFPLTVLSLLGSTIAHPYGETEAVLRSEPKSNQAKADAVKEAFQHAWNGYMKYAFPHDELTPVSNGHADSRNGWGASAVDALSTAVIMGKADVVNAILEHVADIDFSKTSDTVSLFETTIRYLAGMLSGYDLLQGPAKNLVDNQDLIDGLLDQSRNLADVLKFAFDTPSGVPYNNINITSHGNDGATTNGLAVTGTLVLEWTRLSDLTGDEEYAKLSQKAESYLLKPQPSSSEPFPGLVGSSININDGQFADSRVSWNGGDDSFYEYLIKMYVYDPKRFETYKDRWVLAAESTIKHLKSHPKSRPDLTFLSSYSNRNYDLSSQHLTCFDGGSFLLGGTVLDRQDFIDFGLELVDGCEATYNSTLTKIGPDSWGWDPKKVPSDQKEFYEKAGFYISSGSYVLRPEVIESFYYAHRVTGKEIYRDWVWNAFVAINSTCRTDSGFAAVSDVNKANGGSKYDNQESFLFAEVMKYSYLAHSEDAAWQVQKGGKNTFVYNTEAHPISVARN.

The N-terminal stretch at 1 to 35 (MRLPVSFPLTVLSLLGSTIAHPYGETEAVLRSEPK) is a signal peptide. The N-linked (GlcNAc...) asparagine glycan is linked to Asn-182. A disulfide bond links Cys-332 and Cys-361. An N-linked (GlcNAc...) asparagine glycan is attached at Asn-366. The Proton donor role is filled by Asp-375. N-linked (GlcNAc...) asparagine glycosylation is present at Asn-438. Position 501 (Thr-501) interacts with Ca(2+).

This sequence belongs to the glycosyl hydrolase 47 family. As to quaternary structure, homodimer. It depends on Ca(2+) as a cofactor.

It is found in the secreted. The catalysed reaction is N(4)-(alpha-D-Man-(1-&gt;2)-alpha-D-Man-(1-&gt;2)-alpha-D-Man-(1-&gt;3)-[alpha-D-Man-(1-&gt;2)-alpha-D-Man-(1-&gt;3)-[alpha-D-Man-(1-&gt;2)-alpha-D-Man-(1-&gt;6)]-alpha-D-Man-(1-&gt;6)]-beta-D-Man-(1-&gt;4)-beta-D-GlcNAc-(1-&gt;4)-beta-D-GlcNAc)-L-asparaginyl-[protein] (N-glucan mannose isomer 9A1,2,3B1,2,3) + 4 H2O = N(4)-(alpha-D-Man-(1-&gt;3)-[alpha-D-Man-(1-&gt;3)-[alpha-D-Man-(1-&gt;6)]-alpha-D-Man-(1-&gt;6)]-beta-D-Man-(1-&gt;4)-beta-D-GlcNAc-(1-&gt;4)-beta-D-GlcNAc)-L-asparaginyl-[protein] (N-glucan mannose isomer 5A1,2) + 4 beta-D-mannose. The enzyme catalyses N(4)-(alpha-D-Man-(1-&gt;2)-alpha-D-Man-(1-&gt;2)-alpha-D-Man-(1-&gt;3)-[alpha-D-Man-(1-&gt;3)-[alpha-D-Man-(1-&gt;2)-alpha-D-Man-(1-&gt;6)]-alpha-D-Man-(1-&gt;6)]-beta-D-Man-(1-&gt;4)-beta-D-GlcNAc-(1-&gt;4)-beta-D-GlcNAc)-L-asparaginyl-[protein] (N-glucan mannose isomer 8A1,2,3B1,3) + 3 H2O = N(4)-(alpha-D-Man-(1-&gt;3)-[alpha-D-Man-(1-&gt;3)-[alpha-D-Man-(1-&gt;6)]-alpha-D-Man-(1-&gt;6)]-beta-D-Man-(1-&gt;4)-beta-D-GlcNAc-(1-&gt;4)-beta-D-GlcNAc)-L-asparaginyl-[protein] (N-glucan mannose isomer 5A1,2) + 3 beta-D-mannose. The protein operates within protein modification; protein glycosylation. Functionally, involved in the maturation of Asn-linked oligosaccharides. Progressively trim alpha-1,2-linked mannose residues from Man(9)GlcNAc(2) to produce Man(5)GlcNAc(2). The chain is Mannosyl-oligosaccharide alpha-1,2-mannosidase (MSDC) from Penicillium citrinum.